The following is an 83-amino-acid chain: Small ribosomal subunit protein bS16 (83 aa).

This sequence belongs to the bacterial ribosomal protein bS16 family.

This is Small ribosomal subunit protein bS16 from Polaromonas sp. (strain JS666 / ATCC BAA-500).